Consider the following 343-residue polypeptide: Endoplasmic reticulum-resident calcium binding protein (343 aa).

The first 26 residues, 1–26, serve as a signal peptide directing secretion; the sequence is MMKINLYKLLCFICVIFLLHKNVVRS. 5 consecutive EF-hand domains span residues 59 to 94, 95 to 130, 135 to 170, 172 to 207, and 210 to 245; these read GAKERIEKLFHLIDKNNDKEITEEELNTWSSFLKNE, IFLKQVQAEMGQIDSDKDGFISLNELNDAFAQNLDA, KHSEGLLKRFQIVDKDKDGKLSINEVGLLIDPMKDE, LKELEINEILEHHDVNKDGKISLDEFKQTRSDESSG, and KDDEMALDDFNFFDANKDGFIDKEEIIKVYFDPAHE. 23 residues coordinate Ca(2+): Asp-72, Asn-74, Asp-76, Glu-78, Glu-83, Asp-108, Asp-110, Asp-112, Glu-119, Asp-148, Asp-150, Asp-152, Lys-154, Glu-159, Asp-185, Asn-187, Asp-189, Lys-191, Glu-196, Asp-223, Asn-225, Asp-227, and Glu-234. Positions 313-331 are enriched in acidic residues; it reads EDDDMDADNTEDDKDEADD. Residues 313–343 are disordered; it reads EDDDMDADNTEDDKDEADDASQQKSPAIDEL.

It belongs to the CREC family.

It is found in the endoplasmic reticulum. Calcium-binding protein. Required for schizont to ring transition. Required for the breakdown of the parasitophorous vacuole membrane during egress. Required for the proteolytic maturation of apical membrane antigen 1 (AMA-1) during egress. Required for the proteolytic maturation of subtilisin-like protease 1 (SUB1) during egress. Required for the proteolytic maturation of plasmepsin X (PMX) during egress. This is Endoplasmic reticulum-resident calcium binding protein from Plasmodium falciparum (isolate 3D7).